The sequence spans 535 residues: Methylmalonate-semialdehyde/malonate-semialdehyde dehydrogenase [acylating], mitochondrial (535 aa).

The transit peptide at 1–32 directs the protein to the mitochondrion; that stretch reads MAAAVAAAAAVRSRILQVSSKVNSTWYPASSF. N6-acetyllysine; alternate occurs at positions 47, 52, 55, and 76. N6-succinyllysine; alternate occurs at positions 47, 52, 55, and 76. Lys87 carries the N6-acetyllysine modification. Lys117 and Lys129 each carry N6-acetyllysine; alternate. 2 positions are modified to N6-succinyllysine; alternate: Lys117 and Lys129. NAD(+) contacts are provided by Ala183, Phe185, Lys209, Glu212, Arg213, and Ser262. The residue at position 262 (Ser262) is a Phosphoserine. N6-acetyllysine is present on Lys298. The Nucleophile role is filled by Cys317. N6-acetyllysine occurs at positions 330 and 331. An N6-acetyllysine; alternate mark is found at Lys364 and Lys376. Residues Lys364 and Lys376 each carry the N6-succinyllysine; alternate modification. Phosphoserine is present on Ser380. Lys391 carries the post-translational modification N6-succinyllysine. Glu417 contacts NAD(+). Lys500 bears the N6-acetyllysine mark. Position 517 is an N6-succinyllysine (Lys517).

Belongs to the aldehyde dehydrogenase family. In terms of assembly, homotetramer. In terms of tissue distribution, expressed in the head and flagellum of epididymal sperm but not in testicular sperm (at protein level). Kidney &gt; liver &gt; heart &gt; muscle &gt; brain.

The protein localises to the mitochondrion. The catalysed reaction is 3-oxopropanoate + NAD(+) + CoA + H2O = hydrogencarbonate + acetyl-CoA + NADH + H(+). The enzyme catalyses 2-methyl-3-oxopropanoate + NAD(+) + CoA + H2O = propanoyl-CoA + hydrogencarbonate + NADH + H(+). It catalyses the reaction (R)-2-methyl-3-oxopropanoate + NAD(+) + CoA + H2O = propanoyl-CoA + hydrogencarbonate + NADH + H(+). It carries out the reaction (S)-2-methyl-3-oxopropanoate + NAD(+) + CoA + H2O = propanoyl-CoA + hydrogencarbonate + NADH + H(+). In terms of biological role, malonate and methylmalonate semialdehyde dehydrogenase involved in the catabolism of valine, thymine, and compounds catabolized by way of beta-alanine, including uracil and cytidine. This Rattus norvegicus (Rat) protein is Methylmalonate-semialdehyde/malonate-semialdehyde dehydrogenase [acylating], mitochondrial.